Consider the following 1146-residue polypeptide: Probable transport protein MmpL12 (1146 aa).

The next 11 membrane-spanning stretches (helical) occupy residues 25–45 (LIVI…LPTL), 206–226 (VSVL…LVPL), 254–274 (AIVF…VFLI), 298–318 (IGKV…AMVF), 330–350 (AIAV…PAIL), 382–402 (TIHL…TLLI), 826–846 (FIVI…LRAL), 850–870 (IYLI…GTLV), 883–903 (LPGL…MLLI), 928–948 (VITS…GASI), and 949–969 (NTMA…TFLV).

This sequence belongs to the resistance-nodulation-cell division (RND) (TC 2.A.6) family. MmpL subfamily.

It localises to the cell membrane. This is Probable transport protein MmpL12 (mmpL12) from Mycobacterium tuberculosis (strain CDC 1551 / Oshkosh).